We begin with the raw amino-acid sequence, 196 residues long: Holliday junction branch migration complex subunit RuvA (196 aa).

Positions 1 to 63 (MYEYFKGIIS…EDAELLYGFA (63 aa)) are domain I. The interval 64–142 (TEEEKQLFLS…AADGLAESKA (79 aa)) is domain II. Residues 143–146 (PVQT) are flexible linker. Residues 147–196 (VDNQELEEAMEAMLALGYKATELKKIKKFFEGTTDTAENYIKSALKMLVK) are domain III.

This sequence belongs to the RuvA family. Homotetramer. Forms an RuvA(8)-RuvB(12)-Holliday junction (HJ) complex. HJ DNA is sandwiched between 2 RuvA tetramers; dsDNA enters through RuvA and exits via RuvB. An RuvB hexamer assembles on each DNA strand where it exits the tetramer. Each RuvB hexamer is contacted by two RuvA subunits (via domain III) on 2 adjacent RuvB subunits; this complex drives branch migration. In the full resolvosome a probable DNA-RuvA(4)-RuvB(12)-RuvC(2) complex forms which resolves the HJ.

The protein localises to the cytoplasm. In terms of biological role, the RuvA-RuvB-RuvC complex processes Holliday junction (HJ) DNA during genetic recombination and DNA repair, while the RuvA-RuvB complex plays an important role in the rescue of blocked DNA replication forks via replication fork reversal (RFR). RuvA specifically binds to HJ cruciform DNA, conferring on it an open structure. The RuvB hexamer acts as an ATP-dependent pump, pulling dsDNA into and through the RuvAB complex. HJ branch migration allows RuvC to scan DNA until it finds its consensus sequence, where it cleaves and resolves the cruciform DNA. The sequence is that of Holliday junction branch migration complex subunit RuvA from Streptococcus gordonii (strain Challis / ATCC 35105 / BCRC 15272 / CH1 / DL1 / V288).